A 64-amino-acid chain; its full sequence is Large ribosomal subunit protein bL33c (64 aa).

This sequence belongs to the bacterial ribosomal protein bL33 family.

It localises to the plastid. It is found in the chloroplast. This is Large ribosomal subunit protein bL33c (rpl33) from Cyanidium caldarium (Red alga).